Consider the following 405-residue polypeptide: MAKEKFERTKEHVNVGTIGHVDHGKSTLTSAITCVLAAGLVEGGKAKCFKYEEIDKAPEEKERGITINITHVEYETAKRHYAHVDCPGHADYIKNMITGAAQMDGAILVVSAADGPMPQTREHVLLARQVNVPYIVVFMNKCDMVDDEELLELVELEVRELLSKYEYPGDEVPVIRGSALGALQELEQNSPGKWVGSIKELLNAMDEYIPTPEREVDKPFLMPIEDVFSISGRGTVVTGRVERGVLRPGDEVEIVGLREEPLKTVATSIEMFRKVLDEALPGDNIGVLLRGVGKDDVERGQVLAQPGSVKAHRKFRAQVYVLSKEEGGRHTPFFVNYRPQFYFRTADVTGTVVKLPEGVEMVMPGDNVELEVELIAPVALEEGLRFAIREGGRTVGAGVVTKILD.

A tr-type G domain is found at 10 to 213 (KEHVNVGTIG…AMDEYIPTPE (204 aa)). Residues 19–26 (GHVDHGKS) form a G1 region. 19 to 26 (GHVDHGKS) is a GTP binding site. Residue serine 26 participates in Mg(2+) binding. Residues 64–68 (GITIN) are G2. The G3 stretch occupies residues 85–88 (DCPG). Residues 85–89 (DCPGH) and 140–143 (NKCD) each bind GTP. The interval 140 to 143 (NKCD) is G4. Residues 178–180 (SAL) are G5.

It belongs to the TRAFAC class translation factor GTPase superfamily. Classic translation factor GTPase family. EF-Tu/EF-1A subfamily. As to quaternary structure, monomer.

It is found in the cytoplasm. The catalysed reaction is GTP + H2O = GDP + phosphate + H(+). Functionally, GTP hydrolase that promotes the GTP-dependent binding of aminoacyl-tRNA to the A-site of ribosomes during protein biosynthesis. This is Elongation factor Tu from Aquifex pyrophilus.